A 306-amino-acid chain; its full sequence is 2-phosphoglycerate kinase (306 aa).

Residues 1-90 enclose the ATP-cone domain; it reads MIMVQGEVSG…LWRKIRQCKE (90 aa).

The protein belongs to the 2-phosphoglycerate kinase family. Requires a divalent metal cation as cofactor.

It catalyses the reaction (2R)-2-phosphoglycerate + ATP = (2R)-2,3-bisphosphoglycerate + ADP + H(+). It functions in the pathway thermoadapter biosynthesis; cyclic 2,3-diphosphoglycerate biosynthesis; cyclic 2,3-diphosphoglycerate from 2-phospho-D-glycerate: step 1/2. Its function is as follows. Catalyzes the phosphorylation of 2-phosphoglycerate to 2,3-diphosphoglycerate. Involved in the biosynthesis of cyclic 2,3-bisphosphoglycerate, a thermoprotectant. In Methanothermobacter thermautotrophicus (strain ATCC 29096 / DSM 1053 / JCM 10044 / NBRC 100330 / Delta H) (Methanobacterium thermoautotrophicum), this protein is 2-phosphoglycerate kinase.